The primary structure comprises 388 residues: Flavin-dependent monooxygenase (388 aa).

Residue Arg54 participates in NADPH binding. Asp61, Arg117, and Asp311 together coordinate FAD.

Belongs to the aromatic-ring hydroxylase family. TetX subfamily. In terms of assembly, monomer. Requires FAD as cofactor.

Its subcellular location is the cytoplasm. It catalyses the reaction a tetracycline + NADPH + O2 + H(+) = an 11a-hydroxytetracycline + NADP(+) + H2O. It carries out the reaction tetracycline + NADPH + O2 + H(+) = 11a-hydroxytetracycline + NADP(+) + H2O. The catalysed reaction is oxytetracycline + NADPH + O2 + H(+) = 11a-hydroxy-oxytetracycline + NADP(+) + H2O. An FAD-requiring monooxygenase active on some tetracycline antibiotic derivatives, which leads to their inactivation. Hydroxylates carbon 11a of tetracycline and some analogs. In terms of biological role, confers resistance to tetracycline via an oxidoreductase activity; NADPH is more active than NAD. Expression in E.coli leads to breakdown of tetracycline. Confers resistance to doxycycline, chlortetracycline, oxytetracycline and minocycline. The polypeptide is Flavin-dependent monooxygenase (Bacteroides fragilis).